The following is a 266-amino-acid chain: GTP cyclohydrolase FolE2 (266 aa).

Belongs to the GTP cyclohydrolase IV family.

It catalyses the reaction GTP + H2O = 7,8-dihydroneopterin 3'-triphosphate + formate + H(+). It functions in the pathway cofactor biosynthesis; 7,8-dihydroneopterin triphosphate biosynthesis; 7,8-dihydroneopterin triphosphate from GTP: step 1/1. Functionally, converts GTP to 7,8-dihydroneopterin triphosphate. The chain is GTP cyclohydrolase FolE2 from Burkholderia mallei (strain ATCC 23344).